The primary structure comprises 134 residues: Thyrotropin subunit beta (134 aa).

The N-terminal stretch at 1–16 is a signal peptide; sequence MSPFFMMSLLFGLTFG. 6 cysteine pairs are disulfide-bonded: Cys22–Cys72, Cys36–Cys87, Cys39–Cys125, Cys47–Cys103, Cys51–Cys105, and Cys108–Cys115. Asn43 carries N-linked (GlcNAc...) asparagine glycosylation.

It belongs to the glycoprotein hormones subunit beta family. As to quaternary structure, heterodimer of a common alpha chain and a unique beta chain which confers biological specificity to thyrotropin, lutropin, follitropin and gonadotropin.

The protein localises to the secreted. Its function is as follows. Indispensable for the control of thyroid structure and metabolism. In Gallus gallus (Chicken), this protein is Thyrotropin subunit beta (TSHB).